Here is a 209-residue protein sequence, read N- to C-terminus: Protein-L-isoaspartate O-methyltransferase (209 aa).

S59 is a catalytic residue.

This sequence belongs to the methyltransferase superfamily. L-isoaspartyl/D-aspartyl protein methyltransferase family.

The protein localises to the cytoplasm. It catalyses the reaction [protein]-L-isoaspartate + S-adenosyl-L-methionine = [protein]-L-isoaspartate alpha-methyl ester + S-adenosyl-L-homocysteine. Functionally, catalyzes the methyl esterification of L-isoaspartyl residues in peptides and proteins that result from spontaneous decomposition of normal L-aspartyl and L-asparaginyl residues. It plays a role in the repair and/or degradation of damaged proteins. This is Protein-L-isoaspartate O-methyltransferase from Helicobacter pylori (strain P12).